The primary structure comprises 325 residues: GMP reductase (325 aa).

Catalysis depends on cysteine 174, which acts as the Thioimidate intermediate. NADP(+) is bound at residue 203-226 (IVADGGIRNNGDIAKSIRFGASMC).

Belongs to the IMPDH/GMPR family. GuaC type 2 subfamily.

The catalysed reaction is IMP + NH4(+) + NADP(+) = GMP + NADPH + 2 H(+). Catalyzes the irreversible NADPH-dependent deamination of GMP to IMP. It functions in the conversion of nucleobase, nucleoside and nucleotide derivatives of G to A nucleotides, and in maintaining the intracellular balance of A and G nucleotides. The polypeptide is GMP reductase (Ligilactobacillus salivarius (strain UCC118) (Lactobacillus salivarius)).